We begin with the raw amino-acid sequence, 316 residues long: Retinol dehydrogenase 12 (316 aa).

46 to 52 is a binding site for NADP(+); sequence GANTGIG. Residue Ser-175 coordinates substrate. Tyr-200 serves as the catalytic Proton acceptor.

Belongs to the short-chain dehydrogenases/reductases (SDR) family. In terms of tissue distribution, expressed in the inner segments of the photoreceptor in retina.

It catalyses the reaction all-trans-retinol + NADP(+) = all-trans-retinal + NADPH + H(+). It carries out the reaction 11-cis-retinol + NADP(+) = 11-cis-retinal + NADPH + H(+). The enzyme catalyses 9-cis-retinol + NADP(+) = 9-cis-retinal + NADPH + H(+). The catalysed reaction is a 4-hydroxynonen-1-ol + NADP(+) = a 4-hydroxynonenal + NADPH + H(+). It catalyses the reaction (E)-non-2-en-1-ol + NADP(+) = (E)-non-2-enal + NADPH + H(+). It carries out the reaction (Z)-non-6-en-1-ol + NADP(+) = (Z)-non-6-enal + NADPH + H(+). The enzyme catalyses nonan-1-ol + NADP(+) = nonanal + NADPH + H(+). It participates in cofactor metabolism; retinol metabolism. Functionally, retinoids dehydrogenase/reductase with a clear preference for NADP. Displays high activity towards 9-cis, 11-cis and all-trans-retinal. Shows very weak activity toward 13-cis-retinol. Also exhibits activity, albeit with lower affinity than for retinaldehydes, towards lipid peroxidation products (C9 aldehydes) such as 4-hydroxynonenal and trans-2-nonenal. Plays an important function in photoreceptor cells to detoxify 4-hydroxynonenal and potentially other toxic aldehyde products resulting from lipid peroxidation. Has no dehydrogenase activity towards steroids. This Mus musculus (Mouse) protein is Retinol dehydrogenase 12 (Rdh12).